Reading from the N-terminus, the 332-residue chain is GTP 3',8-cyclase (332 aa).

The Radical SAM core domain maps to 9-220 (RFARKVDYLR…DQVRERIAER (212 aa)). Residue Arg-18 participates in GTP binding. 2 residues coordinate [4Fe-4S] cluster: Cys-25 and Cys-29. Residue Tyr-31 participates in S-adenosyl-L-methionine binding. Cys-32 contributes to the [4Fe-4S] cluster binding site. Residue Arg-67 coordinates GTP. Position 71 (Gly-71) interacts with S-adenosyl-L-methionine. Thr-98 lines the GTP pocket. S-adenosyl-L-methionine is bound at residue Ser-122. A GTP-binding site is contributed by Lys-159. S-adenosyl-L-methionine is bound at residue Met-193. 2 residues coordinate [4Fe-4S] cluster: Cys-258 and Cys-261. 263–265 (RVR) contributes to the GTP binding site. [4Fe-4S] cluster is bound at residue Cys-275.

Belongs to the radical SAM superfamily. MoaA family. In terms of assembly, monomer and homodimer. [4Fe-4S] cluster is required as a cofactor.

The catalysed reaction is GTP + AH2 + S-adenosyl-L-methionine = (8S)-3',8-cyclo-7,8-dihydroguanosine 5'-triphosphate + 5'-deoxyadenosine + L-methionine + A + H(+). It functions in the pathway cofactor biosynthesis; molybdopterin biosynthesis. In terms of biological role, catalyzes the cyclization of GTP to (8S)-3',8-cyclo-7,8-dihydroguanosine 5'-triphosphate. This chain is GTP 3',8-cyclase, found in Pseudomonas savastanoi pv. phaseolicola (strain 1448A / Race 6) (Pseudomonas syringae pv. phaseolicola (strain 1448A / Race 6)).